The sequence spans 195 residues: dITP/XTP pyrophosphatase (195 aa).

8 to 13 (SGNAGK) lines the substrate pocket. Positions 38 and 67 each coordinate Mg(2+). D67 serves as the catalytic Proton acceptor. Residues S68, 146 to 149 (FGYD), K169, and 174 to 175 (HR) contribute to the substrate site.

Belongs to the HAM1 NTPase family. Homodimer. The cofactor is Mg(2+).

It carries out the reaction XTP + H2O = XMP + diphosphate + H(+). The catalysed reaction is dITP + H2O = dIMP + diphosphate + H(+). It catalyses the reaction ITP + H2O = IMP + diphosphate + H(+). In terms of biological role, pyrophosphatase that catalyzes the hydrolysis of nucleoside triphosphates to their monophosphate derivatives, with a high preference for the non-canonical purine nucleotides XTP (xanthosine triphosphate), dITP (deoxyinosine triphosphate) and ITP. Seems to function as a house-cleaning enzyme that removes non-canonical purine nucleotides from the nucleotide pool, thus preventing their incorporation into DNA/RNA and avoiding chromosomal lesions. This chain is dITP/XTP pyrophosphatase, found in Parasynechococcus marenigrum (strain WH8102).